The primary structure comprises 48 residues: QGAQCTAGPCCWPCKFLKEGTICRRARGDDLDDYCNGISADCPRNPYY.

Position 1 is a pyrrolidone carboxylic acid (Q1). A Disintegrin domain is found at 1–48 (QGAQCTAGPCCWPCKFLKEGTICRRARGDDLDDYCNGISADCPRNPYY). 3 disulfides stabilise this stretch: C5–C11, C10–C35, and C23–C42. A Cell attachment site motif is present at residues 27–29 (RGD).

The protein belongs to the venom metalloproteinase (M12B) family. P-II subfamily. P-IIa sub-subfamily. As to quaternary structure, monomer (disintegrin). Expressed by the venom gland.

The protein localises to the secreted. Its function is as follows. Inhibit human platelet aggregation induced by ADP, collagen, thrombin or the thromboxane analog U46619 in platelet suspension with IC(50) values of 66-267 nM. Acts by inhibiting fibrinogen interaction with platelet receptors GPIIb/GPIIIa (ITGA2B/ITGB3). It also inhibits angiogenesis in vivo and in vitro by blocking integrin alpha-V/beta-3 (ITGAV/ITGB3) of endothelial cells and by inducing apoptosis. This is Disintegrin accutin from Deinagkistrodon acutus (Hundred-pace snake).